The primary structure comprises 427 residues: tRNA(Ile)-lysidine synthase (427 aa).

Residue 21 to 26 participates in ATP binding; the sequence is SGGADS.

Belongs to the tRNA(Ile)-lysidine synthase family.

The protein resides in the cytoplasm. The enzyme catalyses cytidine(34) in tRNA(Ile2) + L-lysine + ATP = lysidine(34) in tRNA(Ile2) + AMP + diphosphate + H(+). In terms of biological role, ligates lysine onto the cytidine present at position 34 of the AUA codon-specific tRNA(Ile) that contains the anticodon CAU, in an ATP-dependent manner. Cytidine is converted to lysidine, thus changing the amino acid specificity of the tRNA from methionine to isoleucine. The protein is tRNA(Ile)-lysidine synthase of Actinobacillus succinogenes (strain ATCC 55618 / DSM 22257 / CCUG 43843 / 130Z).